The sequence spans 85 residues: Large ribosomal subunit protein bL27 (85 aa).

Positions 1–20 (MATKKAGGSTRNGRDSEAKR) are disordered.

This sequence belongs to the bacterial ribosomal protein bL27 family.

The sequence is that of Large ribosomal subunit protein bL27 from Glaesserella parasuis serovar 5 (strain SH0165) (Haemophilus parasuis).